Here is a 1088-residue protein sequence, read N- to C-terminus: DNA-directed RNA polymerase subunit beta (1088 aa).

The protein belongs to the RNA polymerase beta chain family. In terms of assembly, in plastids the minimal PEP RNA polymerase catalytic core is composed of four subunits: alpha, beta, beta', and beta''. When a (nuclear-encoded) sigma factor is associated with the core the holoenzyme is formed, which can initiate transcription.

The protein resides in the plastid. It is found in the chloroplast. The catalysed reaction is RNA(n) + a ribonucleoside 5'-triphosphate = RNA(n+1) + diphosphate. Its function is as follows. DNA-dependent RNA polymerase catalyzes the transcription of DNA into RNA using the four ribonucleoside triphosphates as substrates. This chain is DNA-directed RNA polymerase subunit beta, found in Ostreococcus tauri.